The primary structure comprises 138 residues: Phospholipase A2 EC1 (138 aa).

Residues methionine 1–glycine 16 form the signal peptide. Intrachain disulfides connect cysteine 42–cysteine 131, cysteine 44–cysteine 60, cysteine 59–cysteine 111, cysteine 65–cysteine 138, cysteine 66–cysteine 104, cysteine 73–cysteine 97, and cysteine 91–cysteine 102. Tyrosine 43, glycine 45, and glycine 47 together coordinate Ca(2+). The active site involves histidine 63. Aspartate 64 serves as a coordination point for Ca(2+). Residue aspartate 105 is part of the active site.

It belongs to the phospholipase A2 family. Group II subfamily. Ca(2+) is required as a cofactor.

The protein resides in the secreted. It catalyses the reaction a 1,2-diacyl-sn-glycero-3-phosphocholine + H2O = a 1-acyl-sn-glycero-3-phosphocholine + a fatty acid + H(+). This is Phospholipase A2 EC1 from Echis coloratus (Carpet viper).